We begin with the raw amino-acid sequence, 75 residues long: Small ribosomal subunit protein bS16 (75 aa).

It belongs to the bacterial ribosomal protein bS16 family.

The polypeptide is Small ribosomal subunit protein bS16 (Campylobacter jejuni subsp. jejuni serotype O:23/36 (strain 81-176)).